The following is a 334-amino-acid chain: Tryptophan--tRNA ligase (334 aa).

Residues 11 to 13 (QPS) and 19 to 20 (GN) contribute to the ATP site. Positions 12 to 20 (PSGELTIGN) match the 'HIGH' region motif. L-tryptophan is bound at residue Asp135. ATP is bound by residues 147-149 (GDD), Ile186, and 195-199 (KMSKS). A 'KMSKS' region motif is present at residues 195-199 (KMSKS).

It belongs to the class-I aminoacyl-tRNA synthetase family. As to quaternary structure, homodimer.

The protein resides in the cytoplasm. It carries out the reaction tRNA(Trp) + L-tryptophan + ATP = L-tryptophyl-tRNA(Trp) + AMP + diphosphate + H(+). Its function is as follows. Catalyzes the attachment of tryptophan to tRNA(Trp). This is Tryptophan--tRNA ligase from Haemophilus influenzae (strain ATCC 51907 / DSM 11121 / KW20 / Rd).